A 457-amino-acid chain; its full sequence is Phosphomethylpyrimidine synthase (457 aa).

Residues Asn-88, Met-117, Tyr-146, His-182, 204–206, 245–248, and Glu-284 contribute to the substrate site; these read SRG and DACR. Zn(2+) is bound at residue His-288. Tyr-311 serves as a coordination point for substrate. His-352 provides a ligand contact to Zn(2+). [4Fe-4S] cluster contacts are provided by Cys-428, Cys-431, and Cys-435.

The protein belongs to the ThiC family. It depends on [4Fe-4S] cluster as a cofactor.

The enzyme catalyses 5-amino-1-(5-phospho-beta-D-ribosyl)imidazole + S-adenosyl-L-methionine = 4-amino-2-methyl-5-(phosphooxymethyl)pyrimidine + CO + 5'-deoxyadenosine + formate + L-methionine + 3 H(+). Its pathway is cofactor biosynthesis; thiamine diphosphate biosynthesis. Its function is as follows. Catalyzes the synthesis of the hydroxymethylpyrimidine phosphate (HMP-P) moiety of thiamine from aminoimidazole ribotide (AIR) in a radical S-adenosyl-L-methionine (SAM)-dependent reaction. The protein is Phosphomethylpyrimidine synthase of Clostridium tetani (strain Massachusetts / E88).